The following is a 317-amino-acid chain: Mitochondrial thiamine pyrophosphate carrier 1 (317 aa).

6 consecutive transmembrane segments (helical) span residues 21-41 (AVSG…ARSV), 86-106 (VPAS…YAWL), 122-142 (LAVG…LDLL), 176-196 (GGAW…GIYE), 207-227 (LPWL…AAVF), and 281-300 (GLTM…LWVY). Solcar repeat units follow at residues 22–109 (VSGL…LNTA), 116–201 (PPQA…CTIA), and 206–306 (GLPW…CLRL).

The protein belongs to the mitochondrial carrier (TC 2.A.29) family.

The protein resides in the mitochondrion inner membrane. Mitochondrial transporter that mediates uptake of thiamine pyrophosphate (ThPP) into mitochondria. The sequence is that of Mitochondrial thiamine pyrophosphate carrier 1 (TPC1) from Eremothecium gossypii (strain ATCC 10895 / CBS 109.51 / FGSC 9923 / NRRL Y-1056) (Yeast).